Consider the following 129-residue polypeptide: Glycine cleavage system H protein (129 aa).

A Lipoyl-binding domain is found at 24 to 106 (LIRVGISAFA…HGAGWLLVVR (83 aa)). Lysine 65 carries the post-translational modification N6-lipoyllysine.

This sequence belongs to the GcvH family. As to quaternary structure, the glycine cleavage system is composed of four proteins: P, T, L and H. It depends on (R)-lipoate as a cofactor.

The glycine cleavage system catalyzes the degradation of glycine. The H protein shuttles the methylamine group of glycine from the P protein to the T protein. This chain is Glycine cleavage system H protein, found in Synechococcus sp. (strain CC9902).